The following is a 456-amino-acid chain: Bifunctional protein GlmU (456 aa).

Residues 1 to 229 (MLNNAMSVVI…LSEVEGVNNR (229 aa)) form a pyrophosphorylase region. UDP-N-acetyl-alpha-D-glucosamine is bound by residues 11–14 (LAAG), Lys-25, Gln-76, 81–82 (GT), 103–105 (YGD), Gly-140, Glu-154, Asn-169, and Asn-227. Asp-105 contributes to the Mg(2+) binding site. Residue Asn-227 coordinates Mg(2+). Residues 230–250 (LQLSRLERVYQSEQAEKLLLA) form a linker region. An N-acetyltransferase region spans residues 251-456 (GVMLRDPARF…EGWRRPVKKK (206 aa)). Positions 333 and 351 each coordinate UDP-N-acetyl-alpha-D-glucosamine. His-363 serves as the catalytic Proton acceptor. UDP-N-acetyl-alpha-D-glucosamine-binding residues include Tyr-366 and Asn-377. Residues Ala-380, 386-387 (NY), Ser-405, Ala-423, and Arg-440 each bind acetyl-CoA.

The protein in the N-terminal section; belongs to the N-acetylglucosamine-1-phosphate uridyltransferase family. This sequence in the C-terminal section; belongs to the transferase hexapeptide repeat family. As to quaternary structure, homotrimer. The cofactor is Mg(2+).

It localises to the cytoplasm. It catalyses the reaction alpha-D-glucosamine 1-phosphate + acetyl-CoA = N-acetyl-alpha-D-glucosamine 1-phosphate + CoA + H(+). The enzyme catalyses N-acetyl-alpha-D-glucosamine 1-phosphate + UTP + H(+) = UDP-N-acetyl-alpha-D-glucosamine + diphosphate. Its pathway is nucleotide-sugar biosynthesis; UDP-N-acetyl-alpha-D-glucosamine biosynthesis; N-acetyl-alpha-D-glucosamine 1-phosphate from alpha-D-glucosamine 6-phosphate (route II): step 2/2. It participates in nucleotide-sugar biosynthesis; UDP-N-acetyl-alpha-D-glucosamine biosynthesis; UDP-N-acetyl-alpha-D-glucosamine from N-acetyl-alpha-D-glucosamine 1-phosphate: step 1/1. The protein operates within bacterial outer membrane biogenesis; LPS lipid A biosynthesis. Functionally, catalyzes the last two sequential reactions in the de novo biosynthetic pathway for UDP-N-acetylglucosamine (UDP-GlcNAc). The C-terminal domain catalyzes the transfer of acetyl group from acetyl coenzyme A to glucosamine-1-phosphate (GlcN-1-P) to produce N-acetylglucosamine-1-phosphate (GlcNAc-1-P), which is converted into UDP-GlcNAc by the transfer of uridine 5-monophosphate (from uridine 5-triphosphate), a reaction catalyzed by the N-terminal domain. The sequence is that of Bifunctional protein GlmU from Escherichia coli O139:H28 (strain E24377A / ETEC).